Here is a 307-residue protein sequence, read N- to C-terminus: MSELTKAQQYNFNKLQKKIRRNTGNAIADYNMIEDGDRIMVCLSGGKDSFTMLDILMSLKKSAPISFDLIAVNLDQKQPGFPAHILPEYLEKLGVEYKIVEEDTYSIVQDKIPEGKTTCSLCSRLRRGILYRTAKELGATKIALGHHRDDILETMFLNMFYGGKLKGMPPKLVSDNGEHVVIRPLAYCREKDIIKYADMRDYPIIPCNLCGSQPNMQRQNVKQMLNTWDKQFPGRIETMFTAMQNVVPSHLADFNTFDFKSINRDSGVINGGDIGFDKEEMPTLPVDADDAVAEFDPSLKLDVVNVD.

Positions 44–49 (SGGKDS) match the PP-loop motif motif. Residues Cys-119, Cys-122, and Cys-210 each contribute to the [4Fe-4S] cluster site.

This sequence belongs to the TtcA family. In terms of assembly, homodimer. Requires Mg(2+) as cofactor. It depends on [4Fe-4S] cluster as a cofactor.

It is found in the cytoplasm. It catalyses the reaction cytidine(32) in tRNA + S-sulfanyl-L-cysteinyl-[cysteine desulfurase] + AH2 + ATP = 2-thiocytidine(32) in tRNA + L-cysteinyl-[cysteine desulfurase] + A + AMP + diphosphate + H(+). Its pathway is tRNA modification. Functionally, catalyzes the ATP-dependent 2-thiolation of cytidine in position 32 of tRNA, to form 2-thiocytidine (s(2)C32). The sulfur atoms are provided by the cysteine/cysteine desulfurase (IscS) system. This chain is tRNA-cytidine(32) 2-sulfurtransferase, found in Aliivibrio fischeri (strain ATCC 700601 / ES114) (Vibrio fischeri).